The sequence spans 68 residues: Long neurotoxin 1 (68 aa).

5 disulfides stabilise this stretch: cysteine 3/cysteine 20, cysteine 13/cysteine 41, cysteine 26/cysteine 30, cysteine 45/cysteine 56, and cysteine 57/cysteine 62.

This sequence belongs to the three-finger toxin family. Long-chain subfamily. Type II alpha-neurotoxin sub-subfamily. In terms of tissue distribution, expressed by the venom gland.

The protein localises to the secreted. In terms of biological role, binds with high affinity to muscular (alpha-1/CHRNA1) and neuronal (alpha-7/CHRNA7) nicotinic acetylcholine receptor (nAChR) and inhibits acetylcholine from binding to the receptor, thereby impairing neuromuscular and neuronal transmission. The protein is Long neurotoxin 1 of Aspidelaps scutatus (Shield-nose snake).